A 561-amino-acid polypeptide reads, in one-letter code: Mercuric reductase (561 aa).

The HMA domain occupies 1–65; it reads MTTLKITGMT…AVAGLGYEAT (65 aa). A metal cation contacts are provided by Cys11 and Cys14. 3 residues coordinate FAD: Ala110, Gly130, and Thr135. The cysteines at positions 136 and 141 are disulfide-linked. Residues Lys145, Ala211, Asp403, and Val411 each coordinate FAD. The Hg(2+) site is built by Cys558 and Cys559.

The protein belongs to the class-I pyridine nucleotide-disulfide oxidoreductase family. In terms of assembly, homodimer. FAD is required as a cofactor.

It catalyses the reaction Hg + NADP(+) + H(+) = Hg(2+) + NADPH. Resistance to Hg(2+) in bacteria appears to be governed by a specialized system which includes mercuric reductase. MerA protein is responsible for volatilizing mercury as Hg(0). In Enterobacter agglomerans (Erwinia herbicola), this protein is Mercuric reductase (merA).